Here is a 308-residue protein sequence, read N- to C-terminus: Ribosomal RNA small subunit methyltransferase H (308 aa).

S-adenosyl-L-methionine contacts are provided by residues 31-33 (GGH), aspartate 51, phenylalanine 75, aspartate 97, and glutamine 104.

Belongs to the methyltransferase superfamily. RsmH family.

Its subcellular location is the cytoplasm. It catalyses the reaction cytidine(1402) in 16S rRNA + S-adenosyl-L-methionine = N(4)-methylcytidine(1402) in 16S rRNA + S-adenosyl-L-homocysteine + H(+). Its function is as follows. Specifically methylates the N4 position of cytidine in position 1402 (C1402) of 16S rRNA. The chain is Ribosomal RNA small subunit methyltransferase H from Tolumonas auensis (strain DSM 9187 / NBRC 110442 / TA 4).